We begin with the raw amino-acid sequence, 630 residues long: MLVFGPNSSFVRHANKKQEDSSIMNEPNGLMDPVLSTTNVSATSSNDNSANNSISSPEYTFGQFSMDSPHRTDATNTPILTATTNTTANNSLMNLKDTASLATNWKWKNSNNAQFVNDGEKQSSNANGKKNGGDKIYSSVATPQALNDELKNLEQLEKVFSPMNPINDSHFNENIELSPHQHATSPKTNLLEAEPSIYSNLFLDARLPNNANSTTGLNDNDYNLDDTNNDNTNSMQSILEDFVSSEEALKFMPDAGRDARRYSEVVTSSFPSMTDSRNSISHSIEFWNLNHKNSSNSKPTQQIIPEGTATTERRGSTISPTTTINNSNPNFKLLDHDVSQALSGYSMDFSKDSGITKPKSISSSLNRISHSSSTTRQQRASLPLIHDIESFANDSVMANPLSDSASFLSEENEDDAFGALNYNSLDATTMSAFDNNVDPFNILKSSPAQDQQFIKPSMMLSDNASAAAKLATSGVDNITPTPAFQRRSYDISMNSSFKILPTSQAHHAAQHHQQQPTKQATVSPNTRRRKSSSVTLSPTISHNNNNGKVPVQPRKRKSITTIDPNNYDKNKPFKCKDCEKAFRRSEHLKRHIRSVHSTERPFACMFCEKKFSRSDNLSQHLKTHKKHGDF.

Met-1 bears the N-acetylmethionine mark. Low complexity predominate over residues 37–56 (TTNVSATSSNDNSANNSISS). 2 disordered regions span residues 37–77 (TTNV…ATNT) and 115–137 (FVND…DKIY). Ser-178 carries the post-translational modification Phosphoserine. A 9aaTAD motif is present at residues 237 to 245 (SILEDFVSS). The residue at position 263 (Ser-263) is a Phosphoserine. A compositionally biased stretch (polar residues) spans 292–303 (KNSSNSKPTQQI). Disordered regions lie at residues 292–322 (KNSS…SPTT) and 360–379 (SISS…RQQR). A phosphoserine mark is found at Ser-316 and Ser-319. Positions 360–373 (SISSSLNRISHSSS) are enriched in low complexity. Thr-479 is subject to Phosphothreonine. Residues 502-566 (TSQAHHAAQH…KSITTIDPNN (65 aa)) are disordered. Residues 504 to 515 (QAHHAAQHHQQQ) show a composition bias toward low complexity. Composition is skewed to polar residues over residues 516–525 (PTKQATVSPN) and 532–547 (SSVT…NNNG). A Phosphoserine modification is found at Ser-558. C2H2-type zinc fingers lie at residues 573 to 596 (FKCK…RSVH) and 602 to 624 (FACM…LKTH).

Its subcellular location is the cytoplasm. The protein resides in the nucleus. In terms of biological role, positive transcriptional factor that acts as a component of the stress responsive system. Recognizes and binds to the stress response element (STRE) which is involved in the response to various forms of stress (heat, oxidative, osmotic, etc.). Involved in the regulation of the CTT1, DDR2, HSP12 genes. This is Zinc finger protein MSN4 (MSN4) from Saccharomyces cerevisiae (strain ATCC 204508 / S288c) (Baker's yeast).